Reading from the N-terminus, the 122-residue chain is Large ribosomal subunit protein uL14 (122 aa).

This sequence belongs to the universal ribosomal protein uL14 family. Part of the 50S ribosomal subunit. Forms a cluster with proteins L3 and L19. In the 70S ribosome, L14 and L19 interact and together make contacts with the 16S rRNA in bridges B5 and B8.

Functionally, binds to 23S rRNA. Forms part of two intersubunit bridges in the 70S ribosome. The polypeptide is Large ribosomal subunit protein uL14 (Thermosipho africanus (strain TCF52B)).